Consider the following 219-residue polypeptide: Uracil-DNA glycosylase (219 aa).

The active-site Proton acceptor is aspartate 59.

This sequence belongs to the uracil-DNA glycosylase (UDG) superfamily. UNG family.

It localises to the cytoplasm. The enzyme catalyses Hydrolyzes single-stranded DNA or mismatched double-stranded DNA and polynucleotides, releasing free uracil.. In terms of biological role, excises uracil residues from the DNA which can arise as a result of misincorporation of dUMP residues by DNA polymerase or due to deamination of cytosine. This chain is Uracil-DNA glycosylase, found in Staphylococcus haemolyticus (strain JCSC1435).